Here is a 260-residue protein sequence, read N- to C-terminus: HMP-PP phosphatase (260 aa).

Aspartate 8 serves as the catalytic Nucleophile. 3 residues coordinate Mg(2+): aspartate 8, aspartate 10, and aspartate 212.

It belongs to the HAD-like hydrolase superfamily. Cof family. It depends on Mg(2+) as a cofactor.

It carries out the reaction 4-amino-2-methyl-5-(diphosphooxymethyl)pyrimidine + H2O = 4-amino-2-methyl-5-(phosphooxymethyl)pyrimidine + phosphate + H(+). Catalyzes the hydrolysis of 4-amino-2-methyl-5-hydroxymethylpyrimidine pyrophosphate (HMP-PP) to 4-amino-2-methyl-5-hydroxymethylpyrimidine phosphate (HMP-P). The polypeptide is HMP-PP phosphatase (Shigella boydii serotype 4 (strain Sb227)).